A 187-amino-acid polypeptide reads, in one-letter code: MMTTILTIHVPSTPGRAWNMLVALQAGNIVARYAKLHLYDAFAIQESRRVDAGNEIAPLLEVEGMKVGLMTCYDLRFPELALAQALQGAEILVLPAAWVRGPLKEHHWSTLLAARALDTTCYMVAAGECGNKNIGQSRIIDPFGVTIAAASEMPALIMAEVTPERVRQVRAQLPVLNNRRFAPPQLL.

A CN hydrolase domain is found at 1 to 163 (MMTTILTIHV…PALIMAEVTP (163 aa)).

This sequence belongs to the carbon-nitrogen hydrolase superfamily. NIT1/NIT2 family.

In terms of biological role, pseudogene resulting from a nucleotide deletion that introduces a premature stop codon at position 66. This is the C-terminal fragment. The intact protein (AC A0A140NCB4) hydrolyzes deaminated glutathione (dGSH, 2-oxoglutaramate) to alpha-ketoglutarate (alpha-KG) and cysteinylglycine, has less activity against alpha-ketoglutaramate (a-KGM) and no activity on glutathione or L-glutamine. May function as a metabolite repair enzyme. The polypeptide is Putative protein YbeM (ybeM) (Escherichia coli (strain K12)).